We begin with the raw amino-acid sequence, 439 residues long: Amino-acid acetyltransferase (439 aa).

Residues 289-429 (EDIRIATVQD…DHYNYQRRSK (141 aa)) enclose the N-acetyltransferase domain.

This sequence belongs to the acetyltransferase family. ArgA subfamily.

It is found in the cytoplasm. The catalysed reaction is L-glutamate + acetyl-CoA = N-acetyl-L-glutamate + CoA + H(+). It functions in the pathway amino-acid biosynthesis; L-arginine biosynthesis; N(2)-acetyl-L-ornithine from L-glutamate: step 1/4. The chain is Amino-acid acetyltransferase from Mannheimia succiniciproducens (strain KCTC 0769BP / MBEL55E).